Here is a 174-residue protein sequence, read N- to C-terminus: Micrococcal nuclease (174 aa).

A signal peptide spans M1–A23. Active-site residues include R52, E60, and R94.

It belongs to the thermonuclease family.

It carries out the reaction Endonucleolytic cleavage to nucleoside 3'-phosphates and 3'-phosphooligonucleotide end-products.. The polypeptide is Micrococcal nuclease (nuc) (Shigella flexneri).